A 225-amino-acid chain; its full sequence is Uracil phosphoribosyltransferase (225 aa).

Residue 36–40 (KGLVR) coordinates GTP. 5-phospho-alpha-D-ribose 1-diphosphate contacts are provided by residues R86, R111, and 145 to 153 (DPMLATGST). Residues I210 and 215–217 (GDA) each bind uracil. A 5-phospho-alpha-D-ribose 1-diphosphate-binding site is contributed by D216.

The protein belongs to the UPRTase family. It depends on Mg(2+) as a cofactor.

It catalyses the reaction UMP + diphosphate = 5-phospho-alpha-D-ribose 1-diphosphate + uracil. The protein operates within pyrimidine metabolism; UMP biosynthesis via salvage pathway; UMP from uracil: step 1/1. Allosterically activated by GTP. Catalyzes the conversion of uracil and 5-phospho-alpha-D-ribose 1-diphosphate (PRPP) to UMP and diphosphate. The sequence is that of Uracil phosphoribosyltransferase from Haloarcula marismortui (strain ATCC 43049 / DSM 3752 / JCM 8966 / VKM B-1809) (Halobacterium marismortui).